Reading from the N-terminus, the 31-residue chain is Toxin BmKK12 (31 aa).

Position 1 is a pyrrolidone carboxylic acid (Gln1). Intrachain disulfides connect Cys4/Cys20, Cys10/Cys25, and Cys14/Cys27. Position 31 is a proline amide (Pro31).

The protein belongs to the short scorpion toxin superfamily. Potassium channel inhibitor family. Alpha-KTx 17 subfamily. The N-terminus is blocked. As to expression, expressed by the venom gland.

It is found in the secreted. Functionally, blocker of potassium channels (Kv). This chain is Toxin BmKK12, found in Olivierus martensii (Manchurian scorpion).